We begin with the raw amino-acid sequence, 457 residues long: tRNA-2-methylthio-N(6)-dimethylallyladenosine synthase (457 aa).

Residues 3-120 enclose the MTTase N-terminal domain; that stretch reads KKVYVKTFGC…LPQMIDARRA (118 aa). [4Fe-4S] cluster-binding residues include Cys12, Cys49, Cys83, Cys157, Cys161, and Cys164. Residues 143 to 377 form the Radical SAM core domain; that stretch reads RVEGPSAFVS…QATIEENVAR (235 aa). The 68-residue stretch at 380–447 folds into the TRAM domain; that stretch reads QSMVGKVERI…PHSLRGELVL (68 aa).

This sequence belongs to the methylthiotransferase family. MiaB subfamily. Monomer. [4Fe-4S] cluster is required as a cofactor.

Its subcellular location is the cytoplasm. It carries out the reaction N(6)-dimethylallyladenosine(37) in tRNA + (sulfur carrier)-SH + AH2 + 2 S-adenosyl-L-methionine = 2-methylsulfanyl-N(6)-dimethylallyladenosine(37) in tRNA + (sulfur carrier)-H + 5'-deoxyadenosine + L-methionine + A + S-adenosyl-L-homocysteine + 2 H(+). In terms of biological role, catalyzes the methylthiolation of N6-(dimethylallyl)adenosine (i(6)A), leading to the formation of 2-methylthio-N6-(dimethylallyl)adenosine (ms(2)i(6)A) at position 37 in tRNAs that read codons beginning with uridine. The polypeptide is tRNA-2-methylthio-N(6)-dimethylallyladenosine synthase (Burkholderia cenocepacia (strain HI2424)).